The following is a 409-amino-acid chain: tRNA(Met) cytidine acetate ligase (409 aa).

ATP contacts are provided by residues 7-20 (VVEY…HLYH), G102, N169, and R194.

It belongs to the TmcAL family.

The protein localises to the cytoplasm. It catalyses the reaction cytidine(34) in elongator tRNA(Met) + acetate + ATP = N(4)-acetylcytidine(34) in elongator tRNA(Met) + AMP + diphosphate. Functionally, catalyzes the formation of N(4)-acetylcytidine (ac(4)C) at the wobble position of elongator tRNA(Met), using acetate and ATP as substrates. First activates an acetate ion to form acetyladenylate (Ac-AMP) and then transfers the acetyl group to tRNA to form ac(4)C34. In Clostridium botulinum (strain ATCC 19397 / Type A), this protein is tRNA(Met) cytidine acetate ligase.